The chain runs to 635 residues: Very-long-chain aldehyde decarbonylase GL1-6 (635 aa).

Transmembrane regions (helical) follow at residues 46-66, 100-120, 127-147, and 183-203; these read LLNF…QLWI, IILT…AQVA, GMVV…YWLH, and VVYF…GTVS. Residues 139 to 273 form the Fatty acid hydroxylase domain; it reads VEFLYYWLHR…MPVYDYIYGT (135 aa).

This sequence belongs to the sterol desaturase family. As to quaternary structure, homodimer.

It is found in the endoplasmic reticulum membrane. It catalyses the reaction a long-chain fatty aldehyde + 2 NADPH + O2 + H(+) = a long-chain alkane + formate + 2 NADP(+) + H2O. Aldehyde decarbonylase involved in the conversion of aldehydes to alkanes. Core component of a very-long-chain alkane synthesis complex. The polypeptide is Very-long-chain aldehyde decarbonylase GL1-6 (Oryza sativa subsp. indica (Rice)).